A 137-amino-acid chain; its full sequence is MITLFLSPSCTSCRKARAWLSKHEVAFEEHNIITSPLNKEELLQILSFTENGTEDIISTRSKVFQKLAIDVDELSTSSLMELISENPSLLRRPIILDKKRMQIGFNEDEIRAFLPRDYRKQELKQATIRAEIEGKHD.

Cysteine 10 and cysteine 13 are joined by a disulfide.

Belongs to the ArsC family. Spx subfamily. In terms of assembly, interacts with the C-terminal domain of the alpha subunit of the RNAP.

The protein localises to the cytoplasm. In terms of biological role, global transcriptional regulator that plays a key role in stress response and exerts either positive or negative regulation of genes. Acts by interacting with the C-terminal domain of the alpha subunit of the RNA polymerase (RNAP). This interaction can enhance binding of RNAP to the promoter region of target genes and stimulate their transcription, or block interaction of RNAP with activator. This is Global transcriptional regulator Spx from Streptococcus agalactiae serotype III (strain NEM316).